A 39-amino-acid chain; its full sequence is uncharacterized protein (39 aa).

This is an uncharacterized protein from Haemophilus influenzae (strain ATCC 51907 / DSM 11121 / KW20 / Rd).